Consider the following 264-residue polypeptide: Putative serine carboxypeptidase-like 53 (264 aa).

An N-terminal signal peptide occupies residues M1–T23. N-linked (GlcNAc...) asparagine glycans are attached at residues N65, N101, N153, and N184.

The protein belongs to the peptidase S10 family.

Its subcellular location is the secreted. The sequence is that of Putative serine carboxypeptidase-like 53 (SCPL53) from Arabidopsis thaliana (Mouse-ear cress).